The chain runs to 213 residues: Uridine kinase (213 aa).

15 to 22 is an ATP binding site; sequence GASASGKS.

It belongs to the uridine kinase family.

Its subcellular location is the cytoplasm. The enzyme catalyses uridine + ATP = UMP + ADP + H(+). It carries out the reaction cytidine + ATP = CMP + ADP + H(+). It functions in the pathway pyrimidine metabolism; CTP biosynthesis via salvage pathway; CTP from cytidine: step 1/3. Its pathway is pyrimidine metabolism; UMP biosynthesis via salvage pathway; UMP from uridine: step 1/1. The chain is Uridine kinase from Escherichia fergusonii (strain ATCC 35469 / DSM 13698 / CCUG 18766 / IAM 14443 / JCM 21226 / LMG 7866 / NBRC 102419 / NCTC 12128 / CDC 0568-73).